A 74-amino-acid polypeptide reads, in one-letter code: UPF0435 protein Bcer98_0391 (74 aa).

Belongs to the UPF0435 family.

The polypeptide is UPF0435 protein Bcer98_0391 (Bacillus cytotoxicus (strain DSM 22905 / CIP 110041 / 391-98 / NVH 391-98)).